Consider the following 139-residue polypeptide: MLSPRRTKFRKQQRGRMRGLAHRGSTLNFGEYALQATEPSWITSRQIEAARRAMTRYIKRGGKIWIRVFPDKPVTMRAAETRMGSGKGSPEYWVAVVKPGRIMFELSGVAEPVAREAMRLAAQKLPIKTKFITRQEEYI.

Belongs to the universal ribosomal protein uL16 family. In terms of assembly, part of the 50S ribosomal subunit.

Its function is as follows. Binds 23S rRNA and is also seen to make contacts with the A and possibly P site tRNAs. The protein is Large ribosomal subunit protein uL16 of Crocosphaera subtropica (strain ATCC 51142 / BH68) (Cyanothece sp. (strain ATCC 51142)).